The primary structure comprises 384 residues: MSLQAIKYFDNQLQIIDQLQLPFVTEYIPIRSAQDGWYAIKEMRVRGAPAIAIVAILSLAVELNEIHTAGKLSSSSEEVGLFIIEKLHYLVTSRPTAVNLADAARKFENMVTEHTRAQDSTGQSLVAAYLKEAELMLVHDLSDNQNIGEYGAKWILERAATQGQNKVNVLTHCNTGSLATAGYGTALGVIRSLHAKNALNRVYCTETRPYNQGARLTAYELVHEKMPATLITDSMAASLLAKSHSKVSAIVVGADRVAANGDTANKIGTYALAVLAKYHGVKFLVAAPRTTIDRGTLTGTEIVIEERAPSEVTTIKGPLQGRVGDTLQMETIQLAATGIDVWNPAFDVTPAALIDAVITEKGVVEKGSDGFFHFDALFEESASS.

Asp255 serves as the catalytic Proton donor.

Belongs to the eIF-2B alpha/beta/delta subunits family. MtnA subfamily.

It localises to the cytoplasm. Its subcellular location is the nucleus. The enzyme catalyses 5-(methylsulfanyl)-alpha-D-ribose 1-phosphate = 5-(methylsulfanyl)-D-ribulose 1-phosphate. The protein operates within amino-acid biosynthesis; L-methionine biosynthesis via salvage pathway; L-methionine from S-methyl-5-thio-alpha-D-ribose 1-phosphate: step 1/6. Functionally, catalyzes the interconversion of methylthioribose-1-phosphate (MTR-1-P) into methylthioribulose-1-phosphate (MTRu-1-P). The sequence is that of Methylthioribose-1-phosphate isomerase (mri1) from Talaromyces stipitatus (strain ATCC 10500 / CBS 375.48 / QM 6759 / NRRL 1006) (Penicillium stipitatum).